The primary structure comprises 347 residues: NADH-ubiquinone oxidoreductase chain 2 (347 aa).

11 helical membrane-spanning segments follow: residues 1-21 (MNPL…AIVM), 25-45 (HWLT…PMLM), 59-79 (YFLT…MNLT), 96-116 (IIMT…FWVP), 127-147 (CLIL…MISP), 149-169 (INLN…GWGG), 178-198 (IMAY…AYNP), 200-220 (MTML…MLLI), 247-267 (IMLS…WMII), 276-296 (IIMP…YMRL), and 325-345 (LLSP…MMSL).

This sequence belongs to the complex I subunit 2 family. In terms of assembly, core subunit of respiratory chain NADH dehydrogenase (Complex I) which is composed of 45 different subunits. Interacts with TMEM242.

The protein localises to the mitochondrion inner membrane. It catalyses the reaction a ubiquinone + NADH + 5 H(+)(in) = a ubiquinol + NAD(+) + 4 H(+)(out). Core subunit of the mitochondrial membrane respiratory chain NADH dehydrogenase (Complex I) which catalyzes electron transfer from NADH through the respiratory chain, using ubiquinone as an electron acceptor. Essential for the catalytic activity and assembly of complex I. The protein is NADH-ubiquinone oxidoreductase chain 2 of Natalus stramineus (Mexican funnel-eared bat).